The primary structure comprises 483 residues: Regulatory protein ViaA (483 aa).

It belongs to the ViaA family. Homodimer. Interacts with RavA.

Its subcellular location is the cytoplasm. Component of the RavA-ViaA chaperone complex, which may act on the membrane to optimize the function of some of the respiratory chains. ViaA stimulates the ATPase activity of RavA. In Shigella flexneri serotype 5b (strain 8401), this protein is Regulatory protein ViaA.